A 162-amino-acid chain; its full sequence is CASP-like protein 1C1 (162 aa).

At 1–7 (MFSAKAR) the chain is on the cytoplasmic side. Residues 8 to 28 (WIVAVVLRVAAAGAAAVAAVL) traverse the membrane as a helical segment. The Extracellular portion of the chain corresponds to 29–52 (MAMSHDEVIVYGMEVQAKFRYTPS). The chain crosses the membrane as a helical span at residues 53-73 (LVFFVAANAAVSACSLVVLLV). At 74–83 (PSSTSKLAAR) the chain is on the cytoplasmic side. A helical membrane pass occupies residues 84 to 104 (LLLMADVVLGMVLAGAFAAAG). Residues 105–135 (AMAELGKNGNSHAGWIAICVQVPLFCDRVRS) are Extracellular-facing. Residues 136-156 (ALVAGSATIVLYYLMLMYSIY) form a helical membrane-spanning segment. Over 157-162 (TLPMFP) the chain is Cytoplasmic.

The protein belongs to the Casparian strip membrane proteins (CASP) family. As to quaternary structure, homodimer and heterodimers.

Its subcellular location is the cell membrane. In Oryza sativa subsp. japonica (Rice), this protein is CASP-like protein 1C1.